Here is a 409-residue protein sequence, read N- to C-terminus: Arginine biosynthesis bifunctional protein ArgJ (409 aa).

Positions 165, 191, 202, 282, 404, and 409 each coordinate substrate. The active-site Nucleophile is the T202.

It belongs to the ArgJ family. As to quaternary structure, heterotetramer of two alpha and two beta chains.

Its subcellular location is the cytoplasm. It catalyses the reaction N(2)-acetyl-L-ornithine + L-glutamate = N-acetyl-L-glutamate + L-ornithine. The enzyme catalyses L-glutamate + acetyl-CoA = N-acetyl-L-glutamate + CoA + H(+). It functions in the pathway amino-acid biosynthesis; L-arginine biosynthesis; L-ornithine and N-acetyl-L-glutamate from L-glutamate and N(2)-acetyl-L-ornithine (cyclic): step 1/1. Its pathway is amino-acid biosynthesis; L-arginine biosynthesis; N(2)-acetyl-L-ornithine from L-glutamate: step 1/4. Functionally, catalyzes two activities which are involved in the cyclic version of arginine biosynthesis: the synthesis of N-acetylglutamate from glutamate and acetyl-CoA as the acetyl donor, and of ornithine by transacetylation between N(2)-acetylornithine and glutamate. This is Arginine biosynthesis bifunctional protein ArgJ from Parasynechococcus marenigrum (strain WH8102).